The following is a 397-amino-acid chain: Anhydro-N-acetylmuramic acid kinase (397 aa).

9–16 (GTSYDAID) provides a ligand contact to ATP.

This sequence belongs to the anhydro-N-acetylmuramic acid kinase family.

It carries out the reaction 1,6-anhydro-N-acetyl-beta-muramate + ATP + H2O = N-acetyl-D-muramate 6-phosphate + ADP + H(+). The protein operates within amino-sugar metabolism; 1,6-anhydro-N-acetylmuramate degradation. It participates in cell wall biogenesis; peptidoglycan recycling. Functionally, catalyzes the specific phosphorylation of 1,6-anhydro-N-acetylmuramic acid (anhMurNAc) with the simultaneous cleavage of the 1,6-anhydro ring, generating MurNAc-6-P. Is required for the utilization of anhMurNAc either imported from the medium or derived from its own cell wall murein, and thus plays a role in cell wall recycling. This is Anhydro-N-acetylmuramic acid kinase from Rhodococcus erythropolis (strain PR4 / NBRC 100887).